An 85-amino-acid polypeptide reads, in one-letter code: Large ribosomal subunit protein bL31 (85 aa).

Residues 65 to 85 form a disordered region; that stretch reads YGMGGAGKAGEDKKAGDKADA. The span at 73–85 shows a compositional bias: basic and acidic residues; it reads AGEDKKAGDKADA.

This sequence belongs to the bacterial ribosomal protein bL31 family. Type A subfamily. Part of the 50S ribosomal subunit.

Binds the 23S rRNA. The sequence is that of Large ribosomal subunit protein bL31 from Synechococcus sp. (strain WH7803).